Reading from the N-terminus, the 464-residue chain is Bifunctional protein GlmU (464 aa).

The tract at residues 1 to 231 (MDVVIMAAGK…ATQVAGVNSP (231 aa)) is pyrophosphorylase. Residues lysine 20, glutamine 78, 83–84 (GT), 105–107 (SGD), glycine 142, glutamate 156, and asparagine 229 contribute to the UDP-N-acetyl-alpha-D-glucosamine site. Residue aspartate 107 coordinates Mg(2+). Asparagine 229 contacts Mg(2+). Positions 232 to 252 (VQLAALERAFQSKVALQLMEQ) are linker. The interval 253-464 (GVRLADPARL…SIANWKRPSK (212 aa)) is N-acetyltransferase. Residues arginine 343 and lysine 361 each contribute to the UDP-N-acetyl-alpha-D-glucosamine site. Histidine 373 functions as the Proton acceptor in the catalytic mechanism. UDP-N-acetyl-alpha-D-glucosamine is bound by residues tyrosine 376 and asparagine 387. Acetyl-CoA contacts are provided by residues alanine 390, 396-397 (NY), serine 415, glycine 433, and arginine 450.

The protein in the N-terminal section; belongs to the N-acetylglucosamine-1-phosphate uridyltransferase family. In the C-terminal section; belongs to the transferase hexapeptide repeat family. As to quaternary structure, homotrimer. It depends on Mg(2+) as a cofactor.

The protein resides in the cytoplasm. The catalysed reaction is alpha-D-glucosamine 1-phosphate + acetyl-CoA = N-acetyl-alpha-D-glucosamine 1-phosphate + CoA + H(+). The enzyme catalyses N-acetyl-alpha-D-glucosamine 1-phosphate + UTP + H(+) = UDP-N-acetyl-alpha-D-glucosamine + diphosphate. The protein operates within nucleotide-sugar biosynthesis; UDP-N-acetyl-alpha-D-glucosamine biosynthesis; N-acetyl-alpha-D-glucosamine 1-phosphate from alpha-D-glucosamine 6-phosphate (route II): step 2/2. Its pathway is nucleotide-sugar biosynthesis; UDP-N-acetyl-alpha-D-glucosamine biosynthesis; UDP-N-acetyl-alpha-D-glucosamine from N-acetyl-alpha-D-glucosamine 1-phosphate: step 1/1. It functions in the pathway bacterial outer membrane biogenesis; LPS lipid A biosynthesis. In terms of biological role, catalyzes the last two sequential reactions in the de novo biosynthetic pathway for UDP-N-acetylglucosamine (UDP-GlcNAc). The C-terminal domain catalyzes the transfer of acetyl group from acetyl coenzyme A to glucosamine-1-phosphate (GlcN-1-P) to produce N-acetylglucosamine-1-phosphate (GlcNAc-1-P), which is converted into UDP-GlcNAc by the transfer of uridine 5-monophosphate (from uridine 5-triphosphate), a reaction catalyzed by the N-terminal domain. This Albidiferax ferrireducens (strain ATCC BAA-621 / DSM 15236 / T118) (Rhodoferax ferrireducens) protein is Bifunctional protein GlmU.